The following is a 529-amino-acid chain: Low affinity inorganic phosphate transporter 4 (529 aa).

The Cytoplasmic segment spans residues 1 to 21 (MASDNLVVLNALDTARTQWYH). A helical membrane pass occupies residues 22–42 (VTAVIIAGMGFFTDAYDLFCI). At 43 to 71 (STVSKLLGRLYYYDPSTKAPGKLPHMANN) the chain is on the extracellular side. Residues 72–92 (WVIGVALVGTLSGQLVFGWLG) traverse the membrane as a helical segment. Residues 93-99 (DKLGRKK) lie on the Cytoplasmic side of the membrane. A helical transmembrane segment spans residues 100–120 (VYGLTLILMVICALCSGLSLG). Residues 121-125 (YSPKS) are Extracellular-facing. A helical membrane pass occupies residues 126 to 146 (VIGTLCFFRFWLGFGIGGDYP). Residues 147–161 (LSATIMSEYANKSTR) lie on the Cytoplasmic side of the membrane. The chain crosses the membrane as a helical span at residues 162–182 (GAFIAAVFAMQGVGIIFAGLV). Topologically, residues 183–211 (SMTISKVFLMNFEGKPFNVDEVLSTEPEA) are extracellular. A helical membrane pass occupies residues 212 to 232 (DYVWRIVLMLGALPALLTYYW). Over 233-291 (RMKMPETGRYTAIIEGNAKQAAIDMGKVLDIEIQAEGDKLAQFKAANEYSLLSNEFFQR) the chain is Cytoplasmic. A helical transmembrane segment spans residues 292-312 (HGLHLIGTMSTWFLLDIAFYS). Residues 313 to 344 (QNLTQKDIFPVMGLTSKANTISALREMFETSR) lie on the Extracellular side of the membrane. N314 carries N-linked (GlcNAc...) asparagine glycosylation. A helical transmembrane segment spans residues 345 to 365 (AMFVIALFGTFPGYWFTVFFI). Residues 366 to 374 (EKIGRFKIQ) are Cytoplasmic-facing. A helical transmembrane segment spans residues 375-395 (LVGFFMMSVFMAIIGVKYDYL). Residues 396 to 405 (RNKEHKWTFA) are Extracellular-facing. Residues 406–426 (ALYGLTFFFANFGPNSTTFVL) form a helical membrane-spanning segment. Residues 427–437 (PAELFPTRVRS) lie on the Cytoplasmic side of the membrane. The chain crosses the membrane as a helical span at residues 438–458 (TCHALSAALGKAGAMISAFGI). The Extracellular segment spans residues 459-471 (QQYTQDQDVRKIK). The chain crosses the membrane as a helical span at residues 472–492 (TAMLLLAFTNMVGFCCTFLVT). Residues 493-529 (ETKGRSLEEISGEDGRQNETQMKTTRPVSGHPDDGWE) are Cytoplasmic-facing. Residues 501–529 (EISGEDGRQNETQMKTTRPVSGHPDDGWE) form a disordered region. A compositionally biased stretch (polar residues) spans 510 to 519 (NETQMKTTRP).

The protein belongs to the major facilitator superfamily. Phosphate:H(+) symporter (TC 2.A.1.9) family.

It is found in the cell membrane. The enzyme catalyses phosphate(in) + H(+)(in) = phosphate(out) + H(+)(out). Functionally, low-affinity transporter for external inorganic phosphate (Pi) probably involved in the acquisition of phosphate released by arbuscular mycorrhizal (AM) fungi (e.g. Rhizophagus irregularis and Glomus intraradices) during AM symbiosis. Acts as a Pi-sensing machinery at the root tip level, independently of AM fungi, involved in the regulation of early root branching and lateral roots formation. The chain is Low affinity inorganic phosphate transporter 4 from Petunia hybrida (Petunia).